A 351-amino-acid polypeptide reads, in one-letter code: CREB homolog crh-2 (351 aa).

Disordered regions lie at residues 46-104 (EPCT…EPLG) and 119-149 (SPSA…HQQQ). Low complexity predominate over residues 82–95 (GSSSGSPSSSLSSP). The bZIP domain occupies 282–345 (SLKIVRRKIK…RDLQQKLHQY (64 aa)). The basic motif stretch occupies residues 284 to 304 (KIVRRKIKNKLSAQESRRKRK). Residues 307–314 (IDALEGRL) form a leucine-zipper region.

The protein belongs to the bZIP family.

The protein resides in the nucleus. Its function is as follows. Transcription factor. Plays a role in regulating the developmentally arrested larval state known as dauer, when induced by long-term exposure to the Gram-negative bacterium P.aeruginosa PAO1, but dispensable for dauer formation induced by starvation. Involved in regulating expression of microRNA mir-243, during long-term exposure to P.aeruginosa PAO1. This Caenorhabditis elegans protein is CREB homolog crh-2.